The primary structure comprises 276 residues: MESMSELAPRCLLFPLLLLLPLLLLPAPKLGPSPAGAEETDWVRLPSKCEVCKYVAVELKSAFEETGKTKEVIDTGYGILDGKGSGVKYTKSDLRLIEVTETICKRLLDYSLHKERTGSNRFAKGMSETFETLHNLVHKGVKVVMDIPYELWNETSAEVADLKKQCDVLVEEFEEVIEDWYRNHQEEDLTEFLCANHVLKGKDTSCLAERWSGKKGDIASLGGKKSKKKRSGVKGSSSGSSKQRKELGGLGEDANAEEEEGVQKASPLPHSPPDEL.

The first 26 residues, 1-26 (MESMSELAPRCLLFPLLLLLPLLLLP), serve as a signal peptide directing secretion. The Saposin B-type domain maps to 47 to 269 (SKCEVCKYVA…EGVQKASPLP (223 aa)). 3 disulfides stabilise this stretch: Cys-49–Cys-206, Cys-52–Cys-194, and Cys-104–Cys-166. Asn-153 carries an N-linked (GlcNAc...) asparagine glycan. Positions 153 to 179 (NETSAEVADLKKQCDVLVEEFEEVIED) form a coiled coil. Positions 218 to 276 (IASLGGKKSKKKRSGVKGSSSGSSKQRKELGGLGEDANAEEEEGVQKASPLPHSPPDEL) are disordered.

This sequence belongs to the canopy family. As to quaternary structure, interacts with HSP90B1; this interaction is disrupted in the presence of ATP. Interacts with TLR1, TLR2, TLR4 and TLR9. Strongest interaction with TLR4.

Its subcellular location is the endoplasmic reticulum. Its function is as follows. Toll-like receptor (TLR)-specific co-chaperone for HSP90B1. Required for proper TLR folding, except that of TLR3, and hence controls TLR exit from the endoplasmic reticulum. Consequently, required for both innate and adaptive immune responses. This is Protein canopy homolog 3 (Cnpy3) from Mus musculus (Mouse).